The chain runs to 971 residues: Polyamine-modulated factor 1-binding protein 1 (971 aa).

6 coiled-coil regions span residues Asn-37–Ser-69, Glu-117–Asn-229, Leu-282–Glu-325, Gln-355–Gln-680, Gln-706–Glu-827, and Ile-879–Thr-916.

In terms of tissue distribution, expressed in testis and more specifically in ODF, the sperm tail specific cytoskeletal structure. Also expressed in epididymides and brain.

The protein localises to the cell projection. It localises to the cilium. Its subcellular location is the flagellum. Functionally, required for normal spermatogenesis. It functions as a scaffold protein that attaches the sperm head-tail connecting piece to the nuclear envelope, thus maintaining sperm head and tail integrity. May also be involved in the general organization of cellular cytoskeleton. The protein is Polyamine-modulated factor 1-binding protein 1 (Pmfbp1) of Rattus norvegicus (Rat).